We begin with the raw amino-acid sequence, 334 residues long: Fructose-1,6-bisphosphatase class 1 (334 aa).

Mg(2+)-binding residues include glutamate 91, aspartate 113, leucine 115, and aspartate 116. Substrate is bound by residues 116–119 (DGSS), asparagine 208, and lysine 274. Mg(2+) is bound at residue glutamate 280.

Belongs to the FBPase class 1 family. As to quaternary structure, homotetramer. Mg(2+) is required as a cofactor.

The protein localises to the cytoplasm. It catalyses the reaction beta-D-fructose 1,6-bisphosphate + H2O = beta-D-fructose 6-phosphate + phosphate. It participates in carbohydrate biosynthesis; gluconeogenesis. The chain is Fructose-1,6-bisphosphatase class 1 from Janthinobacterium sp. (strain Marseille) (Minibacterium massiliensis).